Consider the following 485-residue polypeptide: Ribulose bisphosphate carboxylase large chain (485 aa).

Positions 124 and 174 each coordinate substrate. Lys-176 functions as the Proton acceptor in the catalytic mechanism. Residue Lys-178 participates in substrate binding. Residues Lys-202, Asp-204, and Glu-205 each contribute to the Mg(2+) site. Residue Lys-202 is modified to N6-carboxylysine. His-294 serves as the catalytic Proton acceptor. 3 residues coordinate substrate: Arg-295, His-327, and Ser-379.

It belongs to the RuBisCO large chain family. Type I subfamily. In terms of assembly, heterohexadecamer of 8 large chains and 8 small chains. Mg(2+) serves as cofactor.

It carries out the reaction 2 (2R)-3-phosphoglycerate + 2 H(+) = D-ribulose 1,5-bisphosphate + CO2 + H2O. It catalyses the reaction D-ribulose 1,5-bisphosphate + O2 = 2-phosphoglycolate + (2R)-3-phosphoglycerate + 2 H(+). Functionally, ruBisCO catalyzes two reactions: the carboxylation of D-ribulose 1,5-bisphosphate, the primary event in carbon dioxide fixation, as well as the oxidative fragmentation of the pentose substrate. Both reactions occur simultaneously and in competition at the same active site. In Rhodopseudomonas palustris (strain ATCC BAA-98 / CGA009), this protein is Ribulose bisphosphate carboxylase large chain.